Here is a 1373-residue protein sequence, read N- to C-terminus: TAL effector protein PthXo1 (1373 aa).

Disordered regions lie at residues 1-68 and 127-152; these read MDPI…SAGS and AARPPRAKPAPRRRAAQPSDASPAAQ. Basic residues predominate over residues 131–141; that stretch reads PRAKPAPRRRA. The span at 142–152 shows a compositional bias: low complexity; sequence AQPSDASPAAQ. Residues 221–239 form a Cryptic repeat -1 repeat; it reads THEDIVGVGKQWSGARALE. The Cryptic repeat 0 repeat unit spans residues 256 to 273; it reads DTGQLVKIAKRGGVTAVE. 23 Core repeat repeats span residues 289-322, 323-356, 357-390, 391-424, 425-458, 459-492, 493-525, 526-559, 560-593, 594-627, 628-661, 662-695, 696-729, 730-763, 764-797, 798-831, 832-865, 866-899, 900-933, 934-967, 968-1001, 1002-1034, and 1035-1068; these read LTPAQVVAIASNNGGKQALETVQRLLPVLCQAHG, LTPAQVVAIASHDGGKQALETMQRLLPVLCQAHG, LPPDQVVAIASNIGGKQALETVQRLLPVLCQAHG, LTPDQVVAIASHGGGKQALETVQRLLPVLCQAHG, LTPDQVVAIASHDGGKQALETVQRLLPVLCQAHG, LTPDQVVAIASNGGGKQALETVQRLLPVLCQAHG, LTPDQVVAIASNGGKQALETVQRLLPVLCQAHG, LTPDQVVAIASHDGGKQALETVQRLLPVLCQTHG, LTPAQVVAIASHDGGKQALETVQQLLPVLCQAHG, LTPDQVVAIASNIGGKQALATVQRLLPVLCQAHG, LTQVQVVAIASNIGGKQALETVQRLLPVLCQAHG, LTPAQVVAIASHDGGKQALETVQRLLPVLCQAHG, LTQEQVVAIASNNGGKQALETVQRLLPVLCQAHG, LTPAQVVAIASNIGGKQALETVQRLLPVLCQDHG, LTLAQVVAIASNIGGKQALETVQRLLPVLCQAHG, LTQDQVVAIASNIGGKQALETVQRLLPVLCQDHG, LTPDQVVAIASNIGGKQALETVQRLLPVLCQDHG, LTLDQVVAIASNGGKQALETVQRLLPVLCQDHG, and LTPDQVVAIASNSGGKQALETVQRLLPVLCQDHG. HEAT repeat units lie at residues 714–760, 782–828, 850–893, and 918–961; these read LETV…VLCQ and LETV…LLPV. One copy of the HEAT 5 repeat lies at 1053–1091; the sequence is LETVQRLLPVLCQDHGLTPNQVVAIASNGGKQALESIVA. Residues 1069 to 1087 form a Core repeat 23.5 repeat; the sequence is LTPNQVVAIASNGGKQALE. The segment at 1136–1364 is acidic activation domain; sequence RVNRRIGERT…ELAWLMELLP (229 aa). Residues 1222 to 1225 carry the Nuclear localization signal NLS1 motif; that stretch reads KRAK. The segment at 1250 to 1286 is disordered; that stretch reads LDAPSPMHEGDQTGASSRKRSRSDRAVTGPSAQHSFE. Positions 1268 to 1271 match the Nuclear localization signal NLS2 motif; sequence KRSR. The Nuclear localization signal NLS3 signature appears at 1305 to 1308; it reads KRPR.

Belongs to the transcription activator-like effector (TALE) family.

It localises to the secreted. The protein localises to the host nucleus. Avirulence protein. Acts as a transcription factor in rice, inducing expression of a number of host genes including SWEET11 (Os8N3, XA13, AC Q6YZF3) in susceptible plants with the Xa13 allele. Plants with the xa13 allele, which has an altered promoter, are resistant to bacterial blight caused by this bacterial strain and do not induce SWEET11. The xa13 allele elicits an atypical hypersensitive response (HR). PthXo1 binds SWEET11 promoter DNA in a sequence-specific manner. This Xanthomonas oryzae pv. oryzae (strain PXO99A) protein is TAL effector protein PthXo1 (pthXo1).